Here is a 349-residue protein sequence, read N- to C-terminus: Pinopsin (349 aa).

Residues 1–16 (MDPTNSPQEPPHTSTP) show a composition bias toward polar residues. Positions 1–22 (MDPTNSPQEPPHTSTPGPFDGP) are disordered. At 1–32 (MDPTNSPQEPPHTSTPGPFDGPQWPHQAPRGM) the chain is on the extracellular side. Residues 33–57 (YLSVAVLMGIVVISASVVNGLVIVV) form a helical membrane-spanning segment. Residues 58-69 (SIRYKKLRSPLN) are Cytoplasmic-facing. The helical transmembrane segment at 70–94 (YILVNLAMADLLVTLCGSSVSFSNN) threads the bilayer. Residues 95–109 (INGFFVFGKRLCELE) are Extracellular-facing. Cysteines 106 and 183 form a disulfide. The helical transmembrane segment at 110-129 (GFMVSLTGIVGLWSLAILAL) threads the bilayer. The Cytoplasmic portion of the chain corresponds to 130-148 (ERYVVVCRPLGDFRFQHRH). Residues 149–172 (AVTGCAFTWVWSLLWTTPPLLGWS) traverse the membrane as a helical segment. The Extracellular segment spans residues 173 to 196 (SYVPEGLRTSCGPNWYTGGSNNNS). N-linked (GlcNAc...) asparagine glycosylation occurs at Asn-194. Residues 197–224 (YILTLFVTCFVMPLSLILFSYANLLMTL) form a helical membrane-spanning segment. Topologically, residues 225 to 246 (RAAAAQQQESDTTQQAERQVTR) are cytoplasmic. A helical transmembrane segment spans residues 247 to 270 (MVVAMVMAFLICWLPYTTFALVVA). Topologically, residues 271 to 278 (TNKDIAIQ) are extracellular. The helical transmembrane segment at 279 to 303 (PALASLPSYFSKTATVYNPIIYVFM) threads the bilayer. Lys-290 carries the N6-(retinylidene)lysine modification. Residues 304 to 349 (NKQFQSCLLKMLCCGHHPRGTGRTAPAAPASPTDGLRNKVTPSHPV) lie on the Cytoplasmic side of the membrane. Residues Cys-316 and Cys-317 are each lipidated (S-palmitoyl cysteine). The interval 325–349 (GRTAPAAPASPTDGLRNKVTPSHPV) is disordered.

This sequence belongs to the G-protein coupled receptor 1 family. Opsin subfamily. In terms of processing, phosphorylated on some or all of the serine and threonine residues present in the C-terminal region. In terms of tissue distribution, pineal gland.

It is found in the membrane. Its function is as follows. Produces a slow and prolonged phototransduction response consistent with the non-visual function of pineal photoreception. This Columba livia (Rock dove) protein is Pinopsin.